The sequence spans 629 residues: MNQVTIQWDAVIALYILFSWCHGGITNINCSGHIWVEPATIFKMGMNISIYCQAAIKNCQPRKLHFYKNGIKERFQITRINKTTARLWYKNFLEPHASMYCTAECPKHFQETLICGKDISSGYPPDIPDEVTCVIYEYSGNMTCTWNAGKLTYIDTKYVVHVKSLETEEEQQYLTSSYINISTDSLQGGKKYLVWVQAANALGMEESKQLQIHLDDIVIPSAAVISRAETINATVPKTIIYWDSQTTIEKVSCEMRYKATTNQTWNVKEFDTNFTYVQQSEFYLEPNIKYVFQVRCQETGKRYWQPWSSLFFHKTPETVPQVTSKAFQHDTWNSGLTVASISTGHLTSDNRGDIGLLLGMIVFAVMLSILSLIGIFNRSFRTGIKRRILLLIPKWLYEDIPNMKNSNVVKMLQENSELMNNNSSEQVLYVDPMITEIKEIFIPEHKPTDYKKENTGPLETRDYPQNSLFDNTTVVYIPDLNTGYKPQISNFLPEGSHLSNNNEITSLTLKPPVDSLDSGNNPRLQKHPNFAFSVSSVNSLSNTIFLGELSLILNQGECSSPDIQNSVEEETTMLLENDSPSETIPEQTLLPDEFVSCLGIVNEELPSINTYFPQNILESHFNRISLLEK.

The signal sequence occupies residues 1-23; the sequence is MNQVTIQWDAVIALYILFSWCHG. At 24–355 the chain is on the extracellular side; that stretch reads GITNINCSGH…LTSDNRGDIG (332 aa). A glycan (N-linked (GlcNAc...) asparagine; partial) is linked at N29. N-linked (GlcNAc...) asparagine glycosylation is found at N47, N81, and N141. Fibronectin type-III domains are found at residues 127-217 and 219-318; these read IPDE…LDDI and IPSA…TPET. The N-linked (GlcNAc...) (high mannose) asparagine glycan is linked to N180. N-linked (GlcNAc...) asparagine glycans are attached at residues N232 and N262. N-linked (GlcNAc...) asparagine; partial glycosylation occurs at N273. Residues 356–376 traverse the membrane as a helical segment; the sequence is LLLGMIVFAVMLSILSLIGIF. Residues 377-629 are Cytoplasmic-facing; it reads NRSFRTGIKR…HFNRISLLEK (253 aa).

The protein belongs to the type I cytokine receptor family. Type 2 subfamily. Heterodimer with IL12RB1. In presence of IL23, the heterodimer forms the IL23 receptor. Interacts with JAK2 and in presence of IL23 with STAT3. Post-translationally, phosphorylated in response to IL23. Expressed by monocytes, Th1, Th0, NK and dendritic cells. Isoform 1 is specifically expressed in NK cells.

The protein localises to the cell membrane. Associates with IL12RB1 to form the interleukin-23 receptor. Binds IL23 and mediates T-cells, NK cells and possibly certain macrophage/myeloid cells stimulation probably through activation of the Jak-Stat signaling cascade. IL23 functions in innate and adaptive immunity and may participate in acute response to infection in peripheral tissues. IL23 may be responsible for autoimmune inflammatory diseases and be important for tumorigenesis. The polypeptide is Interleukin-23 receptor (IL23R) (Homo sapiens (Human)).